The chain runs to 345 residues: N-acetyl-gamma-glutamyl-phosphate reductase (345 aa).

Cysteine 149 is an active-site residue.

This sequence belongs to the NAGSA dehydrogenase family. Type 1 subfamily.

The protein localises to the cytoplasm. The catalysed reaction is N-acetyl-L-glutamate 5-semialdehyde + phosphate + NADP(+) = N-acetyl-L-glutamyl 5-phosphate + NADPH + H(+). Its pathway is amino-acid biosynthesis; L-arginine biosynthesis; N(2)-acetyl-L-ornithine from L-glutamate: step 3/4. Its function is as follows. Catalyzes the NADPH-dependent reduction of N-acetyl-5-glutamyl phosphate to yield N-acetyl-L-glutamate 5-semialdehyde. The chain is N-acetyl-gamma-glutamyl-phosphate reductase from Bacillus anthracis.